Reading from the N-terminus, the 174-residue chain is Type II restriction enzyme Bsp6I (174 aa).

The catalysed reaction is Endonucleolytic cleavage of DNA to give specific double-stranded fragments with terminal 5'-phosphates.. Its function is as follows. A P subtype restriction enzyme that recognizes the double-stranded sequence 5'-GCNGC-3' and cleaves after C-2. The polypeptide is Type II restriction enzyme Bsp6I (Bacillus sp. (strain RFL6)).